The chain runs to 261 residues: Probable septum site-determining protein MinC (261 aa).

It belongs to the MinC family. In terms of assembly, interacts with MinD and FtsZ.

Its function is as follows. Cell division inhibitor that blocks the formation of polar Z ring septums. Rapidly oscillates between the poles of the cell to destabilize FtsZ filaments that have formed before they mature into polar Z rings. Prevents FtsZ polymerization. The polypeptide is Probable septum site-determining protein MinC (Burkholderia cenocepacia (strain ATCC BAA-245 / DSM 16553 / LMG 16656 / NCTC 13227 / J2315 / CF5610) (Burkholderia cepacia (strain J2315))).